A 1843-amino-acid chain; its full sequence is Zinc finger protein 142 (1843 aa).

2 C2H2-type zinc fingers span residues 103-127 (YFCERCEQSFAEPTLLSVHQCTETH) and 164-186 (LPCPVCRQEFVQPQALKSHFKIH). Residues 294–357 (PAAKLPPGHR…LEGHVGSGTE (64 aa)) are disordered. The segment covering 318 to 329 (SAEEEDAEEEES) has biased composition (acidic residues). Basic and acidic residues predominate over residues 330–340 (VTQKDSQKVMD). Ser-354 bears the Phosphoserine mark. The segment at 363-385 (HMCPECKRCFKKRTHLVEHLHLH) adopts a C2H2-type 3 zinc-finger fold. The segment at 391–413 (LQCPNCQKFFTSKSKLKTHLLRE) adopts a C2H2-type 4; degenerate zinc-finger fold. 7 C2H2-type zinc fingers span residues 453–475 (YACPVCREEFRLSQALKEHLKSH), 543–566 (FHCPHCDFACSNKHLFRKHKKQGH), 601–623 (HQCSECNFATAHKRVLIRHMLLH), 629–651 (HKCELCDFTCRDVSYLSKHMLTH), 657–679 (YMCTECGYVTKWKHYLSVHMRKH), 685–707 (YQCNQCSYRCHRADQLSSHKLRH), and 744–767 (YPCRYCSYQSRHKQALLSHENCKH). Lys-794 participates in a covalent cross-link: Glycyl lysine isopeptide (Lys-Gly) (interchain with G-Cter in SUMO2). Disordered regions lie at residues 819–888 (QCLA…LGEV) and 1103–1177 (PKPV…TGTS). The segment covering 837 to 846 (PEREDREHEI) has biased composition (basic and acidic residues). Positions 1157–1167 (LPTPSDFPTSP) are enriched in pro residues. Over residues 1168–1177 (PENSLPTGTS) the composition is skewed to polar residues. 9 C2H2-type zinc fingers span residues 1331 to 1354 (LQCGDCGFTCKQSRCLQQHRRLKH), 1388 to 1411 (IPCSSCPQTFGTNSKLRLHQLRVH), 1446 to 1469 (FSCTQCEAQFSSETALKQHALRRH), 1514 to 1537 (LECGACQESFPNRPALDEHRRQHH), 1608 to 1630 (YKCTDCAYSTKNRQKITWHSRIH), 1636 to 1658 (YHCHLCAYACADPSRLKYHMRIH), 1664 to 1686 (YLCPECGYKCKWVNQLKYHMTKH), 1692 to 1715 (YQCPECEYCTNRADALRVHRETRH), and 1721 to 1743 (FMCEQCGKAFKTRFLLRTHLRKH). Glycyl lysine isopeptide (Lys-Gly) (interchain with G-Cter in SUMO2) cross-links involve residues Lys-1353 and Lys-1402. Lys-1747 participates in a covalent cross-link: Glycyl lysine isopeptide (Lys-Gly) (interchain with G-Cter in SUMO2). The C2H2-type 21 zinc finger occupies 1749 to 1771 (YVCNVCHRAFRWAAGLRHHALTH). The tract at residues 1795-1843 (HVRRHHPDQADPNQGVGKDPTTPTVHLHDVKLEDPSPPAPPAPSTGPEG) is disordered. The segment covering 1829-1843 (PSPPAPPAPSTGPEG) has biased composition (pro residues).

It belongs to the krueppel C2H2-type zinc-finger protein family.

The protein localises to the nucleus. May be involved in transcriptional regulation. The chain is Zinc finger protein 142 from Mus musculus (Mouse).